A 439-amino-acid chain; its full sequence is Cysteine--tRNA ligase (439 aa).

Residue cysteine 26 participates in Zn(2+) binding. Positions 28 to 38 match the 'HIGH' region motif; the sequence is PTVYNHVHIGN. The Zn(2+) site is built by cysteine 206, histidine 231, and glutamate 235. The short motif at 263–267 is the 'KMSKS' region element; it reads KMSKS. ATP is bound at residue lysine 266.

This sequence belongs to the class-I aminoacyl-tRNA synthetase family. In terms of assembly, monomer. The cofactor is Zn(2+).

Its subcellular location is the cytoplasm. The catalysed reaction is tRNA(Cys) + L-cysteine + ATP = L-cysteinyl-tRNA(Cys) + AMP + diphosphate. The polypeptide is Cysteine--tRNA ligase (Malacoplasma penetrans (strain HF-2) (Mycoplasma penetrans)).